A 301-amino-acid polypeptide reads, in one-letter code: tRNA-cytidine(32) 2-sulfurtransferase (301 aa).

Residues 55-60 (SGGKDS) carry the PP-loop motif motif. The [4Fe-4S] cluster site is built by Cys-130, Cys-133, and Cys-221.

It belongs to the TtcA family. As to quaternary structure, homodimer. Requires Mg(2+) as cofactor. [4Fe-4S] cluster is required as a cofactor.

It is found in the cytoplasm. It catalyses the reaction cytidine(32) in tRNA + S-sulfanyl-L-cysteinyl-[cysteine desulfurase] + AH2 + ATP = 2-thiocytidine(32) in tRNA + L-cysteinyl-[cysteine desulfurase] + A + AMP + diphosphate + H(+). It participates in tRNA modification. Its function is as follows. Catalyzes the ATP-dependent 2-thiolation of cytidine in position 32 of tRNA, to form 2-thiocytidine (s(2)C32). The sulfur atoms are provided by the cysteine/cysteine desulfurase (IscS) system. This chain is tRNA-cytidine(32) 2-sulfurtransferase, found in Acinetobacter baylyi (strain ATCC 33305 / BD413 / ADP1).